The primary structure comprises 342 residues: N-acetyl-gamma-glutamyl-phosphate reductase (342 aa).

Cysteine 146 is an active-site residue.

This sequence belongs to the NAGSA dehydrogenase family. Type 1 subfamily.

Its subcellular location is the cytoplasm. The catalysed reaction is N-acetyl-L-glutamate 5-semialdehyde + phosphate + NADP(+) = N-acetyl-L-glutamyl 5-phosphate + NADPH + H(+). The protein operates within amino-acid biosynthesis; L-arginine biosynthesis; N(2)-acetyl-L-ornithine from L-glutamate: step 3/4. Catalyzes the NADPH-dependent reduction of N-acetyl-5-glutamyl phosphate to yield N-acetyl-L-glutamate 5-semialdehyde. The chain is N-acetyl-gamma-glutamyl-phosphate reductase from Streptomyces coelicolor (strain ATCC BAA-471 / A3(2) / M145).